We begin with the raw amino-acid sequence, 393 residues long: Methylthioribose kinase (393 aa).

Residues N38, K53, and 107–109 contribute to the ATP site; that span reads EDL. D225 contacts substrate. 242–244 provides a ligand contact to ATP; it reads DPE. R332 contacts substrate.

Belongs to the methylthioribose kinase family. In terms of assembly, homodimer.

It catalyses the reaction 5-(methylsulfanyl)-D-ribose + ATP = 5-(methylsulfanyl)-alpha-D-ribose 1-phosphate + ADP + H(+). It functions in the pathway amino-acid biosynthesis; L-methionine biosynthesis via salvage pathway; S-methyl-5-thio-alpha-D-ribose 1-phosphate from S-methyl-5'-thioadenosine (hydrolase route): step 2/2. Functionally, catalyzes the phosphorylation of methylthioribose into methylthioribose-1-phosphate. The polypeptide is Methylthioribose kinase (Bacillus anthracis (strain A0248)).